The chain runs to 790 residues: Lon protease 2 (790 aa).

One can recognise a Lon N-terminal domain in the interval 18–210 (LRILPLRNMV…HVTFYMTRQL (193 aa)). 362-369 (GPPGVGKT) is an ATP binding site. The region spanning 598 to 779 (SWGCGIATGL…SDVLQLALLP (182 aa)) is the Lon proteolytic domain. Catalysis depends on residues Ser-685 and Lys-728.

Belongs to the peptidase S16 family. In terms of assembly, homohexamer. Organized in a ring with a central cavity.

It is found in the cytoplasm. It carries out the reaction Hydrolysis of proteins in presence of ATP.. ATP-dependent serine protease that mediates the selective degradation of mutant and abnormal proteins as well as certain short-lived regulatory proteins. Required for cellular homeostasis and for survival from DNA damage and developmental changes induced by stress. Degrades polypeptides processively to yield small peptide fragments that are 5 to 10 amino acids long. Binds to DNA in a double-stranded, site-specific manner. This Syntrophobacter fumaroxidans (strain DSM 10017 / MPOB) protein is Lon protease 2.